The primary structure comprises 140 residues: 3-hydroxyacyl-[acyl-carrier-protein] dehydratase FabZ (140 aa).

Residue His47 is part of the active site.

It belongs to the thioester dehydratase family. FabZ subfamily.

It localises to the cytoplasm. It carries out the reaction a (3R)-hydroxyacyl-[ACP] = a (2E)-enoyl-[ACP] + H2O. Involved in unsaturated fatty acids biosynthesis. Catalyzes the dehydration of short chain beta-hydroxyacyl-ACPs and long chain saturated and unsaturated beta-hydroxyacyl-ACPs. This Streptococcus sanguinis (strain SK36) protein is 3-hydroxyacyl-[acyl-carrier-protein] dehydratase FabZ.